Reading from the N-terminus, the 226-residue chain is ATP synthase F(0) complex subunit a (226 aa).

6 helical membrane-spanning segments follow: residues 12-32 (PTMM…ILFP), 68-88 (WTLM…LGLL), 97-117 (QLSM…FMGF), 135-155 (IFLI…QPMA), 164-184 (ITAG…LMDI), and 189-209 (ALIT…VAMI).

Belongs to the ATPase A chain family. Component of the ATP synthase complex composed at least of ATP5F1A/subunit alpha, ATP5F1B/subunit beta, ATP5MC1/subunit c (homooctomer), MT-ATP6/subunit a, MT-ATP8/subunit 8, ATP5ME/subunit e, ATP5MF/subunit f, ATP5MG/subunit g, ATP5MK/subunit k, ATP5MJ/subunit j, ATP5F1C/subunit gamma, ATP5F1D/subunit delta, ATP5F1E/subunit epsilon, ATP5PF/subunit F6, ATP5PB/subunit b, ATP5PD/subunit d, ATP5PO/subunit OSCP. ATP synthase complex consists of a soluble F(1) head domain (subunits alpha(3) and beta(3)) - the catalytic core - and a membrane F(0) domain - the membrane proton channel (subunits c, a, 8, e, f, g, k and j). These two domains are linked by a central stalk (subunits gamma, delta, and epsilon) rotating inside the F1 region and a stationary peripheral stalk (subunits F6, b, d, and OSCP). Interacts with DNAJC30; interaction is direct.

The protein resides in the mitochondrion inner membrane. It catalyses the reaction H(+)(in) = H(+)(out). In terms of biological role, subunit a, of the mitochondrial membrane ATP synthase complex (F(1)F(0) ATP synthase or Complex V) that produces ATP from ADP in the presence of a proton gradient across the membrane which is generated by electron transport complexes of the respiratory chain. ATP synthase complex consist of a soluble F(1) head domain - the catalytic core - and a membrane F(1) domain - the membrane proton channel. These two domains are linked by a central stalk rotating inside the F(1) region and a stationary peripheral stalk. During catalysis, ATP synthesis in the catalytic domain of F(1) is coupled via a rotary mechanism of the central stalk subunits to proton translocation. With the subunit c (ATP5MC1), forms the proton-conducting channel in the F(0) domain, that contains two crucial half-channels (inlet and outlet) that facilitate proton movement from the mitochondrial intermembrane space (IMS) into the matrix. Protons are taken up via the inlet half-channel and released through the outlet half-channel, following a Grotthuss mechanism. The sequence is that of ATP synthase F(0) complex subunit a from Equus asinus (Donkey).